The primary structure comprises 318 residues: Ankyrin repeat and SOCS box protein 7 (318 aa).

7 ANK repeats span residues Gln13–Gly42, Asn46–Val75, Gly80–Ile109, Asp116–Pro145, Lys149–Ile178, Asn180–Leu208, and Asp213–Thr242. In terms of domain architecture, SOCS box spans Leu265 to Ile318.

The protein belongs to the ankyrin SOCS box (ASB) family. Interacts with CUL5. Interacts with RNF7. Interacts with PSRC1.

It functions in the pathway protein modification; protein ubiquitination. Probable substrate-recognition component of a SCF-like ECS (Elongin-Cullin-SOCS-box protein) E3 ubiquitin-protein ligase complex which mediates the ubiquitination and subsequent proteasomal degradation of target proteins. Plays a role in spindle dynamics and genome integrity by targeting the mitotic progression protein PSRC1 for proteasomal degradation in a cell cycle-dependent manner. Also participates in meiosis by mediating the proper attachment between kinetochores and microtubules. In Macaca fascicularis (Crab-eating macaque), this protein is Ankyrin repeat and SOCS box protein 7 (ASB7).